Consider the following 166-residue polypeptide: Ribonuclease H2 subunit C (166 aa).

Position 1 is an N-acetylmethionine (Met1).

This sequence belongs to the RNase H2 subunit C family. The RNase H2 complex is a heterotrimer composed of the catalytic subunit RNASEH2A and the non-catalytic subunits RNASEH2B and RNASEH2C.

Its subcellular location is the nucleus. Its function is as follows. Non catalytic subunit of RNase H2, an endonuclease that specifically degrades the RNA of RNA:DNA hybrids. Participates in DNA replication, possibly by mediating the removal of lagging-strand Okazaki fragment RNA primers during DNA replication. Mediates the excision of single ribonucleotides from DNA:RNA duplexes. This is Ribonuclease H2 subunit C (Rnaseh2c) from Mus musculus (Mouse).